The chain runs to 297 residues: tRNA-cytidine(32) 2-sulfurtransferase (297 aa).

A PP-loop motif motif is present at residues 61-66 (SGGKDS). Cysteine 136, cysteine 139, and cysteine 227 together coordinate [4Fe-4S] cluster.

This sequence belongs to the TtcA family. Homodimer. Mg(2+) is required as a cofactor. It depends on [4Fe-4S] cluster as a cofactor.

It is found in the cytoplasm. It catalyses the reaction cytidine(32) in tRNA + S-sulfanyl-L-cysteinyl-[cysteine desulfurase] + AH2 + ATP = 2-thiocytidine(32) in tRNA + L-cysteinyl-[cysteine desulfurase] + A + AMP + diphosphate + H(+). It participates in tRNA modification. Functionally, catalyzes the ATP-dependent 2-thiolation of cytidine in position 32 of tRNA, to form 2-thiocytidine (s(2)C32). The sulfur atoms are provided by the cysteine/cysteine desulfurase (IscS) system. The protein is tRNA-cytidine(32) 2-sulfurtransferase of Paracoccus denitrificans (strain Pd 1222).